Reading from the N-terminus, the 336-residue chain is Glyceraldehyde-3-phosphate dehydrogenase 1 (336 aa).

NAD(+) is bound by residues 13–14 (RI) and D35. S59 is modified (phosphoserine). R80 is an NAD(+) binding site. S125 carries the phosphoserine modification. D-glyceraldehyde 3-phosphate-binding positions include 151 to 153 (SCT), T182, 211 to 212 (TG), and R234. C152 functions as the Nucleophile in the catalytic mechanism. N316 contacts NAD(+).

It belongs to the glyceraldehyde-3-phosphate dehydrogenase family. Homotetramer.

It localises to the cytoplasm. It catalyses the reaction D-glyceraldehyde 3-phosphate + phosphate + NAD(+) = (2R)-3-phospho-glyceroyl phosphate + NADH + H(+). Its pathway is carbohydrate degradation; glycolysis; pyruvate from D-glyceraldehyde 3-phosphate: step 1/5. The chain is Glyceraldehyde-3-phosphate dehydrogenase 1 (tdh1) from Schizosaccharomyces pombe (strain 972 / ATCC 24843) (Fission yeast).